A 199-amino-acid polypeptide reads, in one-letter code: dITP/XTP pyrophosphatase (199 aa).

8–13 lines the substrate pocket; the sequence is TSNINK. Catalysis depends on aspartate 68, which acts as the Proton acceptor. Aspartate 68 contributes to the Mg(2+) binding site. Substrate contacts are provided by residues serine 69, 155–158, lysine 177, and 182–183; these read FGYN and HR.

It belongs to the HAM1 NTPase family. As to quaternary structure, homodimer. Mg(2+) is required as a cofactor.

The catalysed reaction is XTP + H2O = XMP + diphosphate + H(+). It carries out the reaction dITP + H2O = dIMP + diphosphate + H(+). The enzyme catalyses ITP + H2O = IMP + diphosphate + H(+). In terms of biological role, pyrophosphatase that catalyzes the hydrolysis of nucleoside triphosphates to their monophosphate derivatives, with a high preference for the non-canonical purine nucleotides XTP (xanthosine triphosphate), dITP (deoxyinosine triphosphate) and ITP. Seems to function as a house-cleaning enzyme that removes non-canonical purine nucleotides from the nucleotide pool, thus preventing their incorporation into DNA/RNA and avoiding chromosomal lesions. The protein is dITP/XTP pyrophosphatase of Borrelia recurrentis (strain A1).